A 3598-amino-acid polypeptide reads, in one-letter code: Dystrophin, isoforms A/C/F/G/H (3598 aa).

The segment at 1–230 is actin-binding; the sequence is MEPGILIDER…YVMCLYHAME (230 aa). Calponin-homology (CH) domains lie at 12–116 and 127–230; these read HIQK…LEFN and NGVE…HAME. Positions 233 to 297 are disordered; the sequence is RTRQQEQEQD…SGELKTHSMR (65 aa). Residues 267–286 are compositionally biased toward polar residues; sequence NDQTSLGLYTSDSAGSMEQR. Spectrin repeat units follow at residues 307-420, 423-525, 851-963, 1056-1170, 1173-1275, and 1381-1483; these read VEIS…KILM, AEFQ…KLQQ, QDFG…AIEN, SHID…LLEH, TQLG…LLEQ, and SYES…TLER. Disordered stretches follow at residues 1633 to 1696, 1716 to 1742, 1799 to 1854, 1878 to 1941, and 2204 to 2233; these read ARNT…VMPD, SLNP…SSPA, EDSD…ENTS, RDIL…EPLV, and GPRI…NEPS. The segment covering 1663-1679 has biased composition (low complexity); sequence SGESPSSAHTSSSESPT. Positions 1803–1816 are enriched in basic and acidic residues; it reads SSVRVDSQGKEMRR. Residues serine 1832 and serine 1838 each carry the phosphoserine modification. The segment covering 1834 to 1843 has biased composition (acidic residues); the sequence is NDEDSAEQEE. The segment covering 1878–1893 has biased composition (basic and acidic residues); that stretch reads RDILRDSEEEEPKTPD. Polar residues predominate over residues 2218–2233; that stretch reads SAATMSCRSEYNNEPS. Spectrin repeat units follow at residues 2237-2363, 2366-2472, 2475-2576, 2579-2712, and 2715-2819; these read ALAG…QLKN, SDSQ…QLHA, HSLQ…RLES, EHWN…RLDE, and TKMR…VLCQ. Residues 2655 to 2679 are disordered; sequence VSDTSDTEANHDSDSRYMSAEEQSR. A disordered region spans residues 2822–2852; sequence AQQTHENGDDGRTTSNSGTIGPLPNLGQSVK. Positions 2849 to 2882 constitute a WW domain; the sequence is QSVKPPWERATTAANVPYYIDHERETTHWDHPEM. The segment at 3107–3163 adopts a ZZ-type zinc-finger fold; sequence KHQAKCNICKEYPIVGFRYRCLKCFNFDMCQKCFFFGRNAKNHKLTHPMHEYCTTTT. Zn(2+) contacts are provided by cysteine 3112, cysteine 3115, cysteine 3127, cysteine 3130, cysteine 3136, cysteine 3139, histidine 3149, and histidine 3153. Serine 3207 carries the phosphoserine modification. Disordered stretches follow at residues 3316 to 3344, 3387 to 3449, 3483 to 3545, and 3560 to 3598; these read EQSG…GEQG, DEPN…KGIM, LHQQ…QQHL, and ELES…ELQK. Composition is skewed to polar residues over residues 3325–3337 and 3408–3439; these read NGMQ…MTGL and ALNS…QQNG. Low complexity predominate over residues 3485 to 3499; it reads QQQQQQLQQQPPQQQ. Residues 3505-3523 are compositionally biased toward gly residues; the sequence is GNGGMDISGGMQTSGGYLG. The span at 3534 to 3545 shows a compositional bias: low complexity; that stretch reads SSLMQQQHQQHL. Residues 3560–3570 are compositionally biased toward acidic residues; the sequence is ELESINDDLED. Residues 3571 to 3589 are compositionally biased toward low complexity; that stretch reads SSSSNTTNTTTTTTTTATT.

In terms of assembly, component of the dystrophin associated protein complex (DAPC). Interacts with Dg, via the Dg WW domain binding sites. Isoform A, isoform F and isoform G are expressed in the midgut endoderm of stage 12 embryos. In stage 16 embryos, expression is also seen in the pericardial cells, cells at the ectoderm segmental border and cells along the midline of the CNS. During embryogenesis, isoform A is also expressed in the visceral mesoderm, muscle attachment sites, mesectodermal cells at the midline, the gut, and throughout muscle fibers. In larvae, isoform A is found in all muscle fibers, but not detectable in the brain or neuropil.

Its subcellular location is the cell membrane. It localises to the sarcolemma. The protein localises to the cytoplasm. The protein resides in the cytoskeleton. Functionally, required for the maintenance of appropriate synaptic retrograde communication and the stabilization of muscle cell architecture or physiology. Both det and Dg are required for maintenance of early dpp signaling in the presumptive crossvein. Isoform A is not required to maintain muscle integrity, but plays a role in neuromuscular homeostasis by regulating neurotransmitter release. May play a role in anchoring the cytoskeleton to the plasma membrane. The chain is Dystrophin, isoforms A/C/F/G/H (Dys) from Drosophila melanogaster (Fruit fly).